The following is a 1235-amino-acid chain: Ubiquitin carboxyl-terminal hydrolase 40 (1235 aa).

Residues 41 to 482 (SGIRNQGGTC…SAYMLFYRKA (442 aa)) form the USP domain. Cysteine 50 functions as the Nucleophile in the catalytic mechanism. The active-site Proton acceptor is histidine 305.

It belongs to the peptidase C19 family.

The catalysed reaction is Thiol-dependent hydrolysis of ester, thioester, amide, peptide and isopeptide bonds formed by the C-terminal Gly of ubiquitin (a 76-residue protein attached to proteins as an intracellular targeting signal).. The sequence is that of Ubiquitin carboxyl-terminal hydrolase 40 (Usp40) from Mus musculus (Mouse).